Here is a 175-residue protein sequence, read N- to C-terminus: Small ribosomal subunit protein uS5 (175 aa).

The 64-residue stretch at 19–82 (WVDRLVSVNR…DDAKKNVIRV (64 aa)) folds into the S5 DRBM domain.

This sequence belongs to the universal ribosomal protein uS5 family. As to quaternary structure, part of the 30S ribosomal subunit. Contacts proteins S4 and S8.

Functionally, with S4 and S12 plays an important role in translational accuracy. In terms of biological role, located at the back of the 30S subunit body where it stabilizes the conformation of the head with respect to the body. In Salinibacter ruber (strain DSM 13855 / M31), this protein is Small ribosomal subunit protein uS5.